The sequence spans 1499 residues: DNA-directed RNA polymerase subunit beta' (1499 aa).

Zn(2+)-binding residues include C67, C69, C82, and C85. Mg(2+) is bound by residues D499, D501, and D503. Zn(2+) is bound by residues C867, C943, C950, and C953.

It belongs to the RNA polymerase beta' chain family. As to quaternary structure, the RNAP catalytic core consists of 2 alpha, 1 beta, 1 beta' and 1 omega subunit. When a sigma factor is associated with the core the holoenzyme is formed, which can initiate transcription. The cofactor is Mg(2+). Requires Zn(2+) as cofactor.

The catalysed reaction is RNA(n) + a ribonucleoside 5'-triphosphate = RNA(n+1) + diphosphate. In terms of biological role, DNA-dependent RNA polymerase catalyzes the transcription of DNA into RNA using the four ribonucleoside triphosphates as substrates. The chain is DNA-directed RNA polymerase subunit beta' from Prosthecochloris aestuarii (strain DSM 271 / SK 413).